The following is a 22-amino-acid chain: NADH dehydrogenase [ubiquinone] 1 alpha subcomplex subunit 9 (22 aa).

The interval 1 to 22 is disordered; it reads ASNLATGGAGPLIXKGTGGRSS.

The protein belongs to the complex I NDUFA9 subunit family. In terms of assembly, complex I is composed of about 45 different subunits. Requires FAD as cofactor.

It localises to the mitochondrion matrix. Accessory subunit of the mitochondrial membrane respiratory chain NADH dehydrogenase (Complex I), that is believed not to be involved in catalysis. Complex I functions in the transfer of electrons from NADH to the respiratory chain. The immediate electron acceptor for the enzyme is believed to be ubiquinone. The chain is NADH dehydrogenase [ubiquinone] 1 alpha subcomplex subunit 9 from Solanum tuberosum (Potato).